A 257-amino-acid chain; its full sequence is Putative hydro-lyase BceJ2315_40370 (257 aa).

This sequence belongs to the D-glutamate cyclase family.

This is Putative hydro-lyase BceJ2315_40370 from Burkholderia cenocepacia (strain ATCC BAA-245 / DSM 16553 / LMG 16656 / NCTC 13227 / J2315 / CF5610) (Burkholderia cepacia (strain J2315)).